The following is a 497-amino-acid chain: MVNTIGFDREKYIEMQSQHIRERREALGGKLYLEMGGKLFDDMHASRVLPGFTPDNKIAMLDRIKDEVEILVCINAKDLERHKIRADLGISYEEDVLRLVDVFRDRGFLVEHVVLTQLENDNRLALAFIERLQRLGIKVSRHRVIPGYPTDMDRIVSDEGFGLNEYAETTRDLVVVTAPGPGSGKLATCLSQVYHEHKRGVAAGYAKFETFPIWNLPLEHPVNLAYEAATVDLNDANVIDHFHLAAYGEQTVNYNRDVEAFPLLKTLLERLMGESPYQSPTDMGVNMAGNCISDDAACRHASEQEIIRRYFKALVEEARTGKDSTQSDRAAVVMAKAGIKASQRVVVEPARQVEERTSLPGCAIELVDGSIITGATSDLLGCSSSMLLNALKHLAGIDDAIHLLSPESIEPIQTLKTVHLGSSNPRLHTDEVLIALSVSAATDSNAQKALDQLKNLRGCDVHTTTILGSVDEGIFRNLGVLVTSDPKFQKNKLYQKR.

The protein belongs to the UPF0371 family.

This chain is UPF0371 protein DIP2346, found in Corynebacterium diphtheriae (strain ATCC 700971 / NCTC 13129 / Biotype gravis).